The chain runs to 249 residues: V-type proton ATPase subunit D 2 (249 aa).

It belongs to the V-ATPase D subunit family. In terms of assembly, V-ATPase is a heteromultimeric enzyme made up of two complexes: the ATP-hydrolytic V1 complex and the proton translocation V0 complex. The V1 complex consists of three catalytic AB heterodimers that form a heterohexamer, three peripheral stalks each consisting of EG heterodimers, one central rotor including subunits D and F, and the regulatory subunits C and H. The proton translocation complex V0 consists of the proton transport subunit a, a ring of proteolipid subunits c9c'', rotary subunit d, subunits e and f, and the accessory subunits VhaAC45 and ATP6AP2.

Its function is as follows. Subunit of the V1 complex of vacuolar(H+)-ATPase (V-ATPase), a multisubunit enzyme composed of a peripheral complex (V1) that hydrolyzes ATP and a membrane integral complex (V0) that translocates protons. V-ATPase is responsible for acidifying and maintaining the pH of intracellular compartments and in some cell types, is targeted to the plasma membrane, where it is responsible for acidifying the extracellular environment. The sequence is that of V-type proton ATPase subunit D 2 (Vha36-3) from Drosophila melanogaster (Fruit fly).